Consider the following 63-residue polypeptide: Large ribosomal subunit protein bL28c (63 aa).

It belongs to the bacterial ribosomal protein bL28 family.

The protein localises to the plastid. It localises to the chloroplast. In Porphyra purpurea (Red seaweed), this protein is Large ribosomal subunit protein bL28c (rpl28).